Consider the following 165-residue polypeptide: LIM domain transcription factor LMO4.2 (165 aa).

2 consecutive LIM zinc-binding domains span residues 21–83 (KRCA…LFGN) and 85–147 (GACS…ALIN).

Its function is as follows. Acts as a positive cofactor of GATA transcription factors to establish the identity of the ventral mesoderm during gastrulation. Down-regulation in the dorsal mesoderm is necessary for the proper formation of this territory since, when present, lmo4 may bind ldb1 and restrict the availability of this cofactor for Spemman organizer transcription factors. At neurula stages, suppresses primary neuron differentiation and modulates gene expression at the Isthmic Organizer of the midbrain-hindbrain boundary. The protein is LIM domain transcription factor LMO4.2 (lmo4.2) of Xenopus tropicalis (Western clawed frog).